The following is a 441-amino-acid chain: Protein translocase subunit SecY (441 aa).

Transmembrane regions (helical) follow at residues 24 to 44 (LFVL…VPGI), 77 to 97 (ILAL…LLAT), 123 to 143 (ATVV…PNML), 152 to 172 (FSFY…LMWL), 181 to 201 (IGNG…PSAI), 215 to 235 (PLVL…VVFV), 272 to 292 (VMPA…TQWF), 313 to 333 (PLYL…YTAM), 373 to 393 (LIGG…TSAW), and 397 to 417 (FYFG…FIVQ).

Belongs to the SecY/SEC61-alpha family. In terms of assembly, component of the Sec protein translocase complex. Heterotrimer consisting of SecY, SecE and SecG subunits. The heterotrimers can form oligomers, although 1 heterotrimer is thought to be able to translocate proteins. Interacts with the ribosome. Interacts with SecDF, and other proteins may be involved. Interacts with SecA.

It is found in the cell inner membrane. Functionally, the central subunit of the protein translocation channel SecYEG. Consists of two halves formed by TMs 1-5 and 6-10. These two domains form a lateral gate at the front which open onto the bilayer between TMs 2 and 7, and are clamped together by SecE at the back. The channel is closed by both a pore ring composed of hydrophobic SecY resides and a short helix (helix 2A) on the extracellular side of the membrane which forms a plug. The plug probably moves laterally to allow the channel to open. The ring and the pore may move independently. The polypeptide is Protein translocase subunit SecY (Haemophilus influenzae (strain ATCC 51907 / DSM 11121 / KW20 / Rd)).